Here is a 424-residue protein sequence, read N- to C-terminus: Tubulin-specific chaperone cofactor E-like protein (424 aa).

Phosphoserine occurs at positions 18 and 41. 7 LRR repeats span residues 73 to 98 (CAHV…IVSN), 99 to 123 (VPQL…TCAG), 124 to 147 (SFSG…HMIL), 150 to 172 (LPDL…PSIC), 173 to 197 (CHSL…KLGV), 199 to 224 (FPSL…SLAR), and 226 to 250 (FPNL…KLNS). The region spanning 262 to 303 (IPLLQPYTTEERRKLVIARLPSVSKLNGSVVTDGEREDSERF) is the LRRCT domain. The Ubiquitin-like domain occupies 334–424 (AEVDLRPQSS…DKIYVESKTK (91 aa)). Residues 349–375 (HFNDQVEEMSIRLDQTVAELKKQLKTL) are a coiled coil.

Abundantly expressed in testis, but is also present in several tissues at a much lower level.

The protein localises to the cytoplasm. Its subcellular location is the cytoskeleton. Functionally, acts as a regulator of tubulin stability. The chain is Tubulin-specific chaperone cofactor E-like protein (TBCEL) from Homo sapiens (Human).